A 310-amino-acid polypeptide reads, in one-letter code: CRAL-TRIO domain-containing protein YKL091C (310 aa).

The CRAL-TRIO domain maps to 101–274 (ERIKLAKMYP…KYGGTSVLHN (174 aa)).

The polypeptide is CRAL-TRIO domain-containing protein YKL091C (Saccharomyces cerevisiae (strain ATCC 204508 / S288c) (Baker's yeast)).